We begin with the raw amino-acid sequence, 566 residues long: 4-coumarate--CoA ligase-like 6 (566 aa).

Positions 1–21 (MAATHLHIPPNPKTQTSHQNP) are disordered. ATP is bound by residues Ser212, Ser213, Gly214, Thr215, Thr216, and Lys220. Tyr263 provides a ligand contact to (E)-4-coumaroyl-AMP. CoA is bound at residue Arg284. The SBD1 stretch occupies residues 286 to 356 (DASDVVNVIE…QTLPHVDLIQ (71 aa)). Residues Ala334, Gln356, Gly357, and Thr361 each contribute to the (E)-4-coumaroyl-AMP site. ATP contacts are provided by Gln356, Gly357, Thr361, Asp442, and Arg457. The tract at residues 357–421 (GYGMTESTAV…IQGPGVMKGY (65 aa)) is SBD2. (E)-4-coumaroyl-AMP contacts are provided by Lys459 and Lys463. Residues Lys465 and Gly466 each contribute to the CoA site. An ATP-binding site is contributed by Lys548. Residues 564–566 (SRL) carry the Microbody targeting signal motif.

It belongs to the ATP-dependent AMP-binding enzyme family. The cofactor is Mg(2+). As to expression, expressed at very low level in leaves.

The protein localises to the peroxisome. The enzyme catalyses (E)-4-coumarate + ATP + CoA = (E)-4-coumaroyl-CoA + AMP + diphosphate. It catalyses the reaction (E)-4-coumarate + ATP + H(+) = (E)-4-coumaroyl-AMP + diphosphate. It carries out the reaction (E)-4-coumaroyl-AMP + CoA = (E)-4-coumaroyl-CoA + AMP + H(+). The catalysed reaction is (E)-ferulate + ATP + CoA = (E)-feruloyl-CoA + AMP + diphosphate. The enzyme catalyses (E)-ferulate + ATP + H(+) = (E)-feruloyl-AMP + diphosphate. It catalyses the reaction (E)-feruloyl-AMP + CoA = (E)-feruloyl-CoA + AMP + H(+). It carries out the reaction (E)-caffeate + ATP + CoA = (E)-caffeoyl-CoA + AMP + diphosphate. The catalysed reaction is (E)-caffeate + ATP + H(+) = (E)-caffeoyl-AMP + diphosphate. The enzyme catalyses (E)-caffeoyl-AMP + CoA = (E)-caffeoyl-CoA + AMP + H(+). It catalyses the reaction (E)-cinnamate + ATP + CoA = (E)-cinnamoyl-CoA + AMP + diphosphate. It carries out the reaction 4-hydroxybenzoate + ATP + CoA = 4-hydroxybenzoyl-CoA + AMP + diphosphate. The catalysed reaction is tetradecanoate + ATP + CoA = tetradecanoyl-CoA + AMP + diphosphate. The enzyme catalyses hexanoate + ATP + CoA = hexanoyl-CoA + AMP + diphosphate. It catalyses the reaction heptanoate + ATP + CoA = heptanoyl-CoA + AMP + diphosphate. Functionally, contributes to jasmonic acid biosynthesis by initiating the beta-oxidative chain shortening of its precursors. Acts as a carboxylate--CoA ligase that can use preferentially p-coumarate, ferulate and caffeate as substrates and, with a lower efficiency, (E)-cinnamate and 4-hydroxybenzoate as substrates. Involved in the biosynthesis of ubiquinone from phenylalanine by activating the propyl side chain of 4-coumarate, and possibly trans-cinnamate and 4-hydroxybenzoate, for subsequent beta-oxidative shortening and the formation of the benzenoid moiety of ubiquinone. Follows a two-step reaction mechanism, wherein the carboxylate substrate first undergoes adenylation by ATP, followed by a thioesterification in the presence of CoA to yield the final CoA thioester. This is 4-coumarate--CoA ligase-like 6 from Arabidopsis thaliana (Mouse-ear cress).